Reading from the N-terminus, the 379-residue chain is MTNIRKNHPLLKIINNSLIDLPTPPNISSLWNFGSLLGACLTIQIITGLFLAMHYTADTTTAFSSVTHICRDVNYGWTIRYLHANGASVFFLCLFIHVGRGLYYGSFTLLETWNVGIILLFSVMATAFMGYVLPWGQMSFWGATVITNLLSAIPYIGTDLVEWIWGGFSVSKATLTRFFALHFVLPFVILALVMIHLLFLHETGSNNPLGTSSNSDKIPFHPYYTTKDFLGLLLLILLLMVLTLFYPDLLGDPDNYSPANPLNTPPHIKPEWYFLFAYAILRSIPNKLGGVMALILSILILAIIPLLQPNKQQTMMFRPLSQFLFWILVADLLTLTWIGGQPVEDPFITIGQVASILYFLLMVLIMPTTCLIENKMLKW.

A run of 4 helical transmembrane segments spans residues F33 to M53, W77 to V98, W113 to L133, and F178 to L198. Residues H83 and H97 each coordinate heme b. H182 and H196 together coordinate heme b. H201 is a binding site for a ubiquinone. Helical transmembrane passes span T226–Y246, L288–Q308, L320–G340, and F347–P367.

This sequence belongs to the cytochrome b family. In terms of assembly, the cytochrome bc1 complex contains 11 subunits: 3 respiratory subunits (MT-CYB, CYC1 and UQCRFS1), 2 core proteins (UQCRC1 and UQCRC2) and 6 low-molecular weight proteins (UQCRH/QCR6, UQCRB/QCR7, UQCRQ/QCR8, UQCR10/QCR9, UQCR11/QCR10 and a cleavage product of UQCRFS1). This cytochrome bc1 complex then forms a dimer. Heme b serves as cofactor.

The protein resides in the mitochondrion inner membrane. Component of the ubiquinol-cytochrome c reductase complex (complex III or cytochrome b-c1 complex) that is part of the mitochondrial respiratory chain. The b-c1 complex mediates electron transfer from ubiquinol to cytochrome c. Contributes to the generation of a proton gradient across the mitochondrial membrane that is then used for ATP synthesis. The polypeptide is Cytochrome b (MT-CYB) (Lepilemur edwardsi (Milne-Edwards's sportive lemur)).